A 167-amino-acid chain; its full sequence is Crossover junction endodeoxyribonuclease RuvC (167 aa).

Catalysis depends on residues aspartate 7, glutamate 67, and aspartate 139. Mg(2+) contacts are provided by aspartate 7, glutamate 67, and aspartate 139.

Belongs to the RuvC family. As to quaternary structure, homodimer which binds Holliday junction (HJ) DNA. The HJ becomes 2-fold symmetrical on binding to RuvC with unstacked arms; it has a different conformation from HJ DNA in complex with RuvA. In the full resolvosome a probable DNA-RuvA(4)-RuvB(12)-RuvC(2) complex forms which resolves the HJ. It depends on Mg(2+) as a cofactor.

The protein localises to the cytoplasm. It catalyses the reaction Endonucleolytic cleavage at a junction such as a reciprocal single-stranded crossover between two homologous DNA duplexes (Holliday junction).. In terms of biological role, the RuvA-RuvB-RuvC complex processes Holliday junction (HJ) DNA during genetic recombination and DNA repair. Endonuclease that resolves HJ intermediates. Cleaves cruciform DNA by making single-stranded nicks across the HJ at symmetrical positions within the homologous arms, yielding a 5'-phosphate and a 3'-hydroxyl group; requires a central core of homology in the junction. The consensus cleavage sequence is 5'-(A/T)TT(C/G)-3'. Cleavage occurs on the 3'-side of the TT dinucleotide at the point of strand exchange. HJ branch migration catalyzed by RuvA-RuvB allows RuvC to scan DNA until it finds its consensus sequence, where it cleaves and resolves the cruciform DNA. This is Crossover junction endodeoxyribonuclease RuvC from Zymomonas mobilis subsp. mobilis (strain ATCC 31821 / ZM4 / CP4).